A 313-amino-acid chain; its full sequence is R2-like ligand binding oxidase (313 aa).

Residues Glu-68, Glu-101, and His-104 each contribute to the Mn(2+) site. Residues 71 to 162 (VTQDIQPFMS…AAQVRASVTY (92 aa)) constitute a cross-link (3-(O4'-tyrosyl)-valine (Val-Tyr)). Glu-101 contributes to the Fe cation binding site. Fe cation is bound by residues Glu-167, Glu-202, and His-205.

It belongs to the ribonucleoside diphosphate reductase small chain family. R2-like ligand binding oxidase subfamily. In terms of assembly, homodimer. Fe cation serves as cofactor. Mn(2+) is required as a cofactor.

Probable oxidase that might be involved in lipid metabolism. In Mycobacteroides abscessus (strain ATCC 19977 / DSM 44196 / CCUG 20993 / CIP 104536 / JCM 13569 / NCTC 13031 / TMC 1543 / L948) (Mycobacterium abscessus), this protein is R2-like ligand binding oxidase.